An 84-amino-acid chain; its full sequence is Sec-independent protein translocase protein TatA (84 aa).

The helical transmembrane segment at Met-1 to Gly-21 threads the bilayer. The segment covering Glu-42–Glu-57 has biased composition (basic and acidic residues). The segment at Glu-42–Ala-84 is disordered. Over residues Thr-62 to Glu-77 the composition is skewed to polar residues.

This sequence belongs to the TatA/E family. In terms of assembly, the Tat system comprises two distinct complexes: a TatABC complex, containing multiple copies of TatA, TatB and TatC subunits, and a separate TatA complex, containing only TatA subunits. Substrates initially bind to the TatABC complex, which probably triggers association of the separate TatA complex to form the active translocon.

It localises to the cell membrane. Functionally, part of the twin-arginine translocation (Tat) system that transports large folded proteins containing a characteristic twin-arginine motif in their signal peptide across membranes. TatA could form the protein-conducting channel of the Tat system. The sequence is that of Sec-independent protein translocase protein TatA from Corynebacterium jeikeium (strain K411).